A 113-amino-acid polypeptide reads, in one-letter code: Ribosome-binding factor A (113 aa).

Belongs to the RbfA family. Monomer. Binds 30S ribosomal subunits, but not 50S ribosomal subunits or 70S ribosomes.

The protein resides in the cytoplasm. Functionally, one of several proteins that assist in the late maturation steps of the functional core of the 30S ribosomal subunit. Associates with free 30S ribosomal subunits (but not with 30S subunits that are part of 70S ribosomes or polysomes). Required for efficient processing of 16S rRNA. May interact with the 5'-terminal helix region of 16S rRNA. The polypeptide is Ribosome-binding factor A (Mycoplasmopsis agalactiae (strain NCTC 10123 / CIP 59.7 / PG2) (Mycoplasma agalactiae)).